The chain runs to 304 residues: NAD kinase (304 aa).

Residue D77 is the Proton acceptor of the active site. NAD(+)-binding positions include 77–78 (DG), R82, 151–152 (NE), R162, D181, and 192–197 (TAYSFS).

The protein belongs to the NAD kinase family. A divalent metal cation serves as cofactor.

Its subcellular location is the cytoplasm. It carries out the reaction NAD(+) + ATP = ADP + NADP(+) + H(+). Its function is as follows. Involved in the regulation of the intracellular balance of NAD and NADP, and is a key enzyme in the biosynthesis of NADP. Catalyzes specifically the phosphorylation on 2'-hydroxyl of the adenosine moiety of NAD to yield NADP. This chain is NAD kinase, found in Leifsonia xyli subsp. xyli (strain CTCB07).